A 194-amino-acid polypeptide reads, in one-letter code: Imidazoleglycerol-phosphate dehydratase (194 aa).

Belongs to the imidazoleglycerol-phosphate dehydratase family.

It is found in the cytoplasm. The catalysed reaction is D-erythro-1-(imidazol-4-yl)glycerol 3-phosphate = 3-(imidazol-4-yl)-2-oxopropyl phosphate + H2O. Its pathway is amino-acid biosynthesis; L-histidine biosynthesis; L-histidine from 5-phospho-alpha-D-ribose 1-diphosphate: step 6/9. This Listeria welshimeri serovar 6b (strain ATCC 35897 / DSM 20650 / CCUG 15529 / CIP 8149 / NCTC 11857 / SLCC 5334 / V8) protein is Imidazoleglycerol-phosphate dehydratase.